Here is a 420-residue protein sequence, read N- to C-terminus: C-methyltransferase NovU (420 aa).

This sequence belongs to the methyltransferase superfamily.

It functions in the pathway antibiotic biosynthesis; novobiocin biosynthesis. C-methyltransferase that acts together with NovW to catalyze the formation of dTDP-4-keto-6-deoxy-5-C-methyl-L-lyxo-hexose from dTDP-4-keto-6-deoxy-D-glucose in the novobiocin biosynthesis pathway, an aminocoumarin family antibiotic that targets bacterial DNA gyrases. This Streptomyces niveus (Streptomyces spheroides) protein is C-methyltransferase NovU (novU).